The chain runs to 196 residues: Lipoprotein signal peptidase (196 aa).

3 helical membrane passes run 17 to 37 (SIII…IDNL), 73 to 93 (SNAI…YLMI), and 96 to 116 (NTIG…GNLI). Residues aspartate 126 and aspartate 144 contribute to the active site. The chain crosses the membrane as a helical span at residues 135–155 (YSFPVFNLADCFITIGVIILI).

Belongs to the peptidase A8 family.

It is found in the cell inner membrane. The enzyme catalyses Release of signal peptides from bacterial membrane prolipoproteins. Hydrolyzes -Xaa-Yaa-Zaa-|-(S,diacylglyceryl)Cys-, in which Xaa is hydrophobic (preferably Leu), and Yaa (Ala or Ser) and Zaa (Gly or Ala) have small, neutral side chains.. It participates in protein modification; lipoprotein biosynthesis (signal peptide cleavage). Functionally, this protein specifically catalyzes the removal of signal peptides from prolipoproteins. In Rickettsia akari (strain Hartford), this protein is Lipoprotein signal peptidase.